The chain runs to 287 residues: Diphthine methyl ester synthase (287 aa).

S-adenosyl-L-methionine-binding positions include Leu9, Asp84, Gly87, 112–113, Leu163, Val221, and His248; that span reads SI.

Belongs to the diphthine synthase family.

It localises to the cytoplasm. The catalysed reaction is 2-[(3S)-amino-3-carboxypropyl]-L-histidyl-[translation elongation factor 2] + 4 S-adenosyl-L-methionine = diphthine methyl ester-[translation elongation factor 2] + 4 S-adenosyl-L-homocysteine + 3 H(+). The protein operates within protein modification; peptidyl-diphthamide biosynthesis. In terms of biological role, S-adenosyl-L-methionine-dependent methyltransferase that catalyzes four methylations of the modified target histidine residue in translation elongation factor 2 (EF-2), to form an intermediate called diphthine methyl ester. The four successive methylation reactions represent the second step of diphthamide biosynthesis. This is Diphthine methyl ester synthase (dph-5) from Neurospora crassa (strain ATCC 24698 / 74-OR23-1A / CBS 708.71 / DSM 1257 / FGSC 987).